Consider the following 761-residue polypeptide: MSAHPVDTVTAATATPDVAQPFKELGLKDDEYARIKEILGRRPTEAELAMYSVMWSEHCSYKSSKVHLKYFGETTTDEMRSSMLAGIGENAGVVDIGDGWAVTFKVESHNHPSYVEPYQGAATGVGGIVRDIMAMGARPIAVMDQLRFGAADAPDTRRVVDGVVRGVGGYGNSLGLPNVGGETVFDESYAGNPLVNALCAGAMRVEDLHLAFASGAGNKIILFGARTGLDGIGGVSVLASETFDGDESGTGRKKLPAVQVGDPFTEKVLIECCLELYAAKLVVGIQDLGGAGLSCATSELAAAGDGGMHINLEQVPMRATGMTAAEVLSSESQERMCAVVTPDNVDAFMEVCKKWDVLATVIGEVTDGERLTISWHGETVVDVPPRTVAHEGPVYERPVQRPASQDALVANTTAGLTRPESADELKATLLKMLASPALCSRKWITEQYDRYVRGNTVLAENADSGVIRVDEKTGRGIALATDASGRYTALDPYAGAQLALAEAFRNVAVTGATPKAVSNCLNFGSPEDPGVMWQFQQAVRGLADGCAKLGIPVTGGNVSFYNQTGSTPILPTPVVAVLGVIDDVHRRIPTGLGLEPGETLILLGDTRDEFDGSIWSQVEHGHLGGVPPKVDLEREQLLADILLAASRDGLVSAAHDLSEGGLAQTVVEAALAGETGCRILLPDDADPFVTLFSESSGRVLVAVPRTEETRFTGMCTARNLPWVRIGVVDEGSDSVEVQGQFSVSLAELRTTFEGTLPALFG.

H58 is a catalytic residue. Positions 61 and 105 each coordinate ATP. Position 107 (E107) interacts with Mg(2+). Residues 108–111 (SHNH) and R130 contribute to the substrate site. H109 functions as the Proton acceptor in the catalytic mechanism. Position 131 (D131) interacts with Mg(2+). Q259 provides a ligand contact to substrate. D287 is a binding site for Mg(2+). Substrate is bound at residue 331–333 (ESQ). 2 residues coordinate ATP: N519 and G556. N557 contributes to the Mg(2+) binding site. S559 is a substrate binding site.

It belongs to the FGAMS family. In terms of assembly, monomer. Part of the FGAM synthase complex composed of 1 PurL, 1 PurQ and 2 PurS subunits.

The protein localises to the cytoplasm. The enzyme catalyses N(2)-formyl-N(1)-(5-phospho-beta-D-ribosyl)glycinamide + L-glutamine + ATP + H2O = 2-formamido-N(1)-(5-O-phospho-beta-D-ribosyl)acetamidine + L-glutamate + ADP + phosphate + H(+). The protein operates within purine metabolism; IMP biosynthesis via de novo pathway; 5-amino-1-(5-phospho-D-ribosyl)imidazole from N(2)-formyl-N(1)-(5-phospho-D-ribosyl)glycinamide: step 1/2. Part of the phosphoribosylformylglycinamidine synthase complex involved in the purines biosynthetic pathway. Catalyzes the ATP-dependent conversion of formylglycinamide ribonucleotide (FGAR) and glutamine to yield formylglycinamidine ribonucleotide (FGAM) and glutamate. The FGAM synthase complex is composed of three subunits. PurQ produces an ammonia molecule by converting glutamine to glutamate. PurL transfers the ammonia molecule to FGAR to form FGAM in an ATP-dependent manner. PurS interacts with PurQ and PurL and is thought to assist in the transfer of the ammonia molecule from PurQ to PurL. The polypeptide is Phosphoribosylformylglycinamidine synthase subunit PurL (Rhodococcus jostii (strain RHA1)).